The sequence spans 212 residues: Adenylate kinase (212 aa).

10–15 contributes to the ATP binding site; it reads GAGKGT. Residues 30–59 are NMP; sequence STGDMFRAAIANQTEMGVLAKSYIDKGELV. AMP contacts are provided by residues Thr-31, Arg-36, 57–59, 86–89, and Gln-93; these read ELV and GYPR. Residues 127-159 are LID; sequence GRIIHRETGETFHKVFNPPADYKEEDYYQREDD. ATP is bound by residues Arg-128 and 137-138; that span reads TF. 2 residues coordinate AMP: Arg-156 and Arg-167. Gln-195 contacts ATP.

It belongs to the adenylate kinase family. In terms of assembly, monomer.

The protein resides in the cytoplasm. The catalysed reaction is AMP + ATP = 2 ADP. The protein operates within purine metabolism; AMP biosynthesis via salvage pathway; AMP from ADP: step 1/1. Functionally, catalyzes the reversible transfer of the terminal phosphate group between ATP and AMP. Plays an important role in cellular energy homeostasis and in adenine nucleotide metabolism. This Streptococcus sanguinis (strain SK36) protein is Adenylate kinase.